Reading from the N-terminus, the 207-residue chain is 3-demethoxyubiquinol 3-hydroxylase (207 aa).

6 residues coordinate Fe cation: E56, E86, H89, E138, E170, and H173.

This sequence belongs to the COQ7 family. Requires Fe cation as cofactor.

The protein localises to the cell membrane. The enzyme catalyses a 5-methoxy-2-methyl-3-(all-trans-polyprenyl)benzene-1,4-diol + AH2 + O2 = a 3-demethylubiquinol + A + H2O. It functions in the pathway cofactor biosynthesis; ubiquinone biosynthesis. In terms of biological role, catalyzes the hydroxylation of 2-nonaprenyl-3-methyl-6-methoxy-1,4-benzoquinol during ubiquinone biosynthesis. In Cupriavidus taiwanensis (strain DSM 17343 / BCRC 17206 / CCUG 44338 / CIP 107171 / LMG 19424 / R1) (Ralstonia taiwanensis (strain LMG 19424)), this protein is 3-demethoxyubiquinol 3-hydroxylase.